The following is a 142-amino-acid chain: Hemoglobin subunit alpha-A (142 aa).

The region spanning 2-142 is the Globin domain; that stretch reads VLSPTDKSIV…VSTVLTSKYR (141 aa). Histidine 59 contacts O2. Histidine 88 contacts heme b.

The protein belongs to the globin family. As to quaternary structure, heterotetramer of two alpha chains and two beta chains. Red blood cells.

Its function is as follows. Involved in oxygen transport from the lung to the various peripheral tissues. This is Hemoglobin subunit alpha-A (HBAA) from Otolemur crassicaudatus (Brown greater galago).